Here is a 128-residue protein sequence, read N- to C-terminus: uncharacterized protein (128 aa).

Disordered stretches follow at residues 1–53 and 85–105; these read MHLP…PKGR and PDGPLTRRYAPTSGKPSSGPL.

This is an uncharacterized protein from Escherichia coli.